The primary structure comprises 341 residues: Glyceraldehyde-3-phosphate dehydrogenase 4 (341 aa).

Residues 13–14, Asp35, and Lys85 each bind NAD(+); that span reads RI. D-glyceraldehyde 3-phosphate contacts are provided by residues 157-159, Thr188, 217-218, and Arg240; these read SCT and TG. Cys158 acts as the Nucleophile in catalysis. Residue Asn322 coordinates NAD(+).

This sequence belongs to the glyceraldehyde-3-phosphate dehydrogenase family. In terms of assembly, homotetramer.

It localises to the cytoplasm. The catalysed reaction is D-glyceraldehyde 3-phosphate + phosphate + NAD(+) = (2R)-3-phospho-glyceroyl phosphate + NADH + H(+). It functions in the pathway carbohydrate degradation; glycolysis; pyruvate from D-glyceraldehyde 3-phosphate: step 1/5. This Caenorhabditis elegans protein is Glyceraldehyde-3-phosphate dehydrogenase 4 (gpd-4).